The following is a 640-amino-acid chain: Chaperone protein DnaK (640 aa).

Residue Thr-196 is modified to Phosphothreonine; by autocatalysis. Disordered stretches follow at residues 487-526 (GKEQSIKIESSSKLTDAEISKMKEDAKEHAAEDQKRKEEI) and 593-640 (SHLY…GNDK). The segment covering 501–526 (TDAEISKMKEDAKEHAAEDQKRKEEI) has biased composition (basic and acidic residues). Residues 595-613 (LYQSQGPESSQPETAAQSD) are compositionally biased toward polar residues. Positions 630–640 (AEYEVIDGNDK) are enriched in acidic residues.

Belongs to the heat shock protein 70 family.

Its function is as follows. Acts as a chaperone. The protein is Chaperone protein DnaK of Pelodictyon phaeoclathratiforme (strain DSM 5477 / BU-1).